The following is a 101-amino-acid chain: Chaperone modulatory protein CbpM (101 aa).

This sequence belongs to the CbpM family.

Functionally, interacts with CbpA and inhibits both the DnaJ-like co-chaperone activity and the DNA binding activity of CbpA. Together with CbpA, modulates the activity of the DnaK chaperone system. Does not inhibit the co-chaperone activity of DnaJ. This chain is Chaperone modulatory protein CbpM, found in Pseudomonas entomophila (strain L48).